Reading from the N-terminus, the 398-residue chain is Dihydrolipoyllysine-residue acetyltransferase component of acetoin cleaving system (398 aa).

In terms of domain architecture, Lipoyl-binding spans 2–77 (AVKVVMPKLG…PPGTAICYIG (76 aa)). N6-lipoyllysine is present on lysine 43. The region spanning 118 to 155 (KISPVARKIAEKAGLDLKQLKGTGPGGRIVKDDVTKAL) is the Peripheral subunit-binding (PSBD) domain. Active-site residues include histidine 371 and aspartate 375.

It belongs to the 2-oxoacid dehydrogenase family. The cofactor is (R)-lipoate.

The catalysed reaction is N(6)-[(R)-dihydrolipoyl]-L-lysyl-[protein] + acetyl-CoA = N(6)-[(R)-S(8)-acetyldihydrolipoyl]-L-lysyl-[protein] + CoA. It functions in the pathway ketone degradation; acetoin degradation. This is Dihydrolipoyllysine-residue acetyltransferase component of acetoin cleaving system (acoC) from Bacillus subtilis (strain 168).